Reading from the N-terminus, the 314-residue chain is uncharacterized protein (314 aa).

Positions 1–70 are disordered; it reads MAGNSQRRGA…QGRHKKTDDT (70 aa). Residues 43 to 65 are compositionally biased toward basic residues; sequence QRPHHPAGKRAAKAARQAQGRHK. Residues Gly-265, Ile-285, and Leu-294 each coordinate S-adenosyl-L-methionine.

This sequence belongs to the class IV-like SAM-binding methyltransferase superfamily. RNA methyltransferase TrmH family.

This is an uncharacterized protein from Mycolicibacterium vanbaalenii (strain DSM 7251 / JCM 13017 / BCRC 16820 / KCTC 9966 / NRRL B-24157 / PYR-1) (Mycobacterium vanbaalenii).